A 41-amino-acid chain; its full sequence is uncharacterized protein (41 aa).

Residues 1–12 (MTRNVVRQEFEA) are compositionally biased toward basic and acidic residues. The interval 1 to 23 (MTRNVVRQEFEAPGKPQDSSQQD) is disordered.

This is an uncharacterized protein from Homo sapiens (Human).